A 353-amino-acid polypeptide reads, in one-letter code: Holliday junction branch migration complex subunit RuvB (353 aa).

The tract at residues 1–182 is large ATPase domain (RuvB-L); sequence MPERLITPKG…FGIVQRLEFY (182 aa). Residues I21, R22, G63, K66, T67, T68, 129 to 131, R172, Y182, and R219 contribute to the ATP site; that span reads EDF. Mg(2+) is bound at residue T67. Residues 183-253 are small ATPAse domain (RuvB-S); it reads NVQDLTRIVQ…VADRALDLLD (71 aa). A head domain (RuvB-H) region spans residues 256 to 353; it reads VQGFDAQDRR…QEEGGGEGKL (98 aa). Positions 292, 311, and 316 each coordinate DNA.

This sequence belongs to the RuvB family. In terms of assembly, homohexamer. Forms an RuvA(8)-RuvB(12)-Holliday junction (HJ) complex. HJ DNA is sandwiched between 2 RuvA tetramers; dsDNA enters through RuvA and exits via RuvB. An RuvB hexamer assembles on each DNA strand where it exits the tetramer. Each RuvB hexamer is contacted by two RuvA subunits (via domain III) on 2 adjacent RuvB subunits; this complex drives branch migration. In the full resolvosome a probable DNA-RuvA(4)-RuvB(12)-RuvC(2) complex forms which resolves the HJ.

It localises to the cytoplasm. It catalyses the reaction ATP + H2O = ADP + phosphate + H(+). Functionally, the RuvA-RuvB-RuvC complex processes Holliday junction (HJ) DNA during genetic recombination and DNA repair, while the RuvA-RuvB complex plays an important role in the rescue of blocked DNA replication forks via replication fork reversal (RFR). RuvA specifically binds to HJ cruciform DNA, conferring on it an open structure. The RuvB hexamer acts as an ATP-dependent pump, pulling dsDNA into and through the RuvAB complex. RuvB forms 2 homohexamers on either side of HJ DNA bound by 1 or 2 RuvA tetramers; 4 subunits per hexamer contact DNA at a time. Coordinated motions by a converter formed by DNA-disengaged RuvB subunits stimulates ATP hydrolysis and nucleotide exchange. Immobilization of the converter enables RuvB to convert the ATP-contained energy into a lever motion, pulling 2 nucleotides of DNA out of the RuvA tetramer per ATP hydrolyzed, thus driving DNA branch migration. The RuvB motors rotate together with the DNA substrate, which together with the progressing nucleotide cycle form the mechanistic basis for DNA recombination by continuous HJ branch migration. Branch migration allows RuvC to scan DNA until it finds its consensus sequence, where it cleaves and resolves cruciform DNA. This Thioalkalivibrio sulfidiphilus (strain HL-EbGR7) protein is Holliday junction branch migration complex subunit RuvB.